The following is a 508-amino-acid chain: Pyruvate kinase (508 aa).

Substrate is bound at residue Arg-56. 4 residues coordinate K(+): Asn-58, Ser-60, Asp-90, and Thr-91. Residue Asn-58–His-61 participates in ATP binding. Residues Arg-97 and Lys-185 each contribute to the ATP site. Glu-251 provides a ligand contact to Mg(2+). Substrate is bound by residues Gly-274, Asp-275, and Thr-307. Asp-275 serves as a coordination point for Mg(2+).

It belongs to the pyruvate kinase family. As to quaternary structure, homotetramer. Requires Mg(2+) as cofactor. K(+) serves as cofactor.

The catalysed reaction is pyruvate + ATP = phosphoenolpyruvate + ADP + H(+). It participates in carbohydrate degradation; glycolysis; pyruvate from D-glyceraldehyde 3-phosphate: step 5/5. Regulated by phosphoenolpyruvate substrate and is allosterically activated by ribose-5-phosphate, AMP and other nucleoside monophosphates but not by fructose-1,6-bisphosphate. In Mycoplasma genitalium (strain ATCC 33530 / DSM 19775 / NCTC 10195 / G37) (Mycoplasmoides genitalium), this protein is Pyruvate kinase (pyk).